We begin with the raw amino-acid sequence, 96 residues long: Putative membrane protein insertion efficiency factor (96 aa).

Belongs to the UPF0161 family.

Its subcellular location is the cell inner membrane. In terms of biological role, could be involved in insertion of integral membrane proteins into the membrane. This Borreliella afzelii (strain PKo) (Borrelia afzelii) protein is Putative membrane protein insertion efficiency factor.